The following is a 299-amino-acid chain: Nicotinate-nucleotide pyrophosphorylase [carboxylating] (299 aa).

An important for hexamer formation region spans residues His-8–Pro-12. Quinolinate-binding positions include Arg-102, Arg-138 to Lys-139, His-160 to Arg-161, Lys-171, Glu-201, Asp-222, Ser-248 to Gly-250, and Gly-270. Phosphothreonine is present on Thr-291.

The protein belongs to the NadC/ModD family. As to quaternary structure, hexamer formed by 3 homodimers.

It catalyses the reaction nicotinate beta-D-ribonucleotide + CO2 + diphosphate = quinolinate + 5-phospho-alpha-D-ribose 1-diphosphate + 2 H(+). Its pathway is cofactor biosynthesis; NAD(+) biosynthesis; nicotinate D-ribonucleotide from quinolinate: step 1/1. Involved in the catabolism of quinolinic acid (QA). This chain is Nicotinate-nucleotide pyrophosphorylase [carboxylating] (QPRT), found in Bos taurus (Bovine).